Reading from the N-terminus, the 704-residue chain is mRNA (2'-O-methyladenosine-N(6)-)-methyltransferase (704 aa).

The disordered stretch occupies residues 1 to 33 (MANENHGSPREEASLLSHSPGTSNQSQPCSPKP). Over residues 16–29 (LSHSPGTSNQSQPC) the composition is skewed to polar residues. A Phosphoserine modification is found at Ser30. The WW domain occupies 43 to 77 (ELVHAGWEKCWSRRENRPYYFNRFTNQSLWEMPVL). Residues 88–151 (GLNATPLPQD…PSSPSIPGTP (64 aa)) are disordered. Residues 109-113 (KPRKR) carry the Nuclear localization signal motif. The residue at position 116 (Ser116) is a Phosphoserine. A compositionally biased stretch (polar residues) spans 136 to 149 (PTGQSVPSSPSIPG). Position 152 is a phosphothreonine (Thr152). Residues Arg235 and Arg265 each coordinate substrate. 553–556 (NPPF) lines the S-adenosyl-L-methionine pocket. Substrate-binding positions include Glu558 and 588–592 (WREPP). 614 to 616 (FEH) lines the S-adenosyl-L-methionine pocket. The disordered stretch occupies residues 663-704 (LSAAYRQSGRSHSSGSSSSSSSEAKDRDSGREQGPSREPHPT). A Nuclear localization signal motif is present at residues 669–684 (QSGRSHSSGSSSSSSS). Low complexity predominate over residues 670 to 684 (SGRSHSSGSSSSSSS). Positions 685–704 (EAKDRDSGREQGPSREPHPT) are enriched in basic and acidic residues.

This sequence belongs to the CAPAM family. As to quaternary structure, interacts with POLR2A; interacts with the phosphorylated C-terminal domain (CTD) of POLR2A. In terms of tissue distribution, ubiquitous.

It localises to the nucleus. It carries out the reaction a 5'-end (N(7)-methyl 5'-triphosphoguanosine)-(2'-O-methyladenosine) in mRNA + S-adenosyl-L-methionine = a 5'-end (N(7)-methyl 5'-triphosphoguanosine)-(N(6),2'-O-dimethyladenosine) in mRNA + S-adenosyl-L-homocysteine + H(+). With respect to regulation, cap-specific adenosine methyltransferase activity is inhibited by zinc. In terms of biological role, cap-specific adenosine methyltransferase that catalyzes formation of N(6),2'-O-dimethyladenosine cap (m6A(m)) by methylating the adenosine at the second transcribed position of capped mRNAs. Recruited to the early elongation complex of RNA polymerase II (RNAPII) via interaction with POLR2A and mediates formation of m6A(m) co-transcriptionally. The chain is mRNA (2'-O-methyladenosine-N(6)-)-methyltransferase from Homo sapiens (Human).